We begin with the raw amino-acid sequence, 200 residues long: MAIDKLPLLLFLSILLCLNRPVLSDTDEEDILLTGINSYRTTQNLTILSKNENAECLADEIADQFKNKPCTNDTGSATVPGTEPQFANYPQILAKCHLNVSDTRDGSIMPACVPRLESNLVLTNFTKSQYSMSLNDSKFTGIGIGKEDDWIVVVLTTNTPEGSYSTATPTKQESNGFTFGIGLVSYLVIFMYSSFCFFLF.

Positions 1–24 (MAIDKLPLLLFLSILLCLNRPVLS) are cleaved as a signal peptide. 5 N-linked (GlcNAc...) asparagine glycosylation sites follow: Asn44, Asn72, Asn99, Asn124, and Asn135. Ser174 carries the GPI-anchor amidated serine lipid modification. Positions 175 to 200 (NGFTFGIGLVSYLVIFMYSSFCFFLF) are cleaved as a propeptide — removed in mature form.

The protein belongs to the UPF0277 family.

It localises to the cell membrane. This is an uncharacterized protein from Arabidopsis thaliana (Mouse-ear cress).